Here is a 182-residue protein sequence, read N- to C-terminus: Probable RNA 2'-phosphotransferase (182 aa).

Belongs to the KptA/TPT1 family.

Its function is as follows. Removes the 2'-phosphate from RNA via an intermediate in which the phosphate is ADP-ribosylated by NAD followed by a presumed transesterification to release the RNA and generate ADP-ribose 1''-2''-cyclic phosphate (APPR&gt;P). May function as an ADP-ribosylase. The protein is Probable RNA 2'-phosphotransferase of Pseudomonas aeruginosa (strain UCBPP-PA14).